The following is a 163-amino-acid chain: Small ribosomal subunit protein uS9 (163 aa).

Over residues 1 to 25 (MAENTNNSAVTETEETTAAFTTETN) the composition is skewed to low complexity. The disordered stretch occupies residues 1 to 40 (MAENTNNSAVTETEETTAAFTTETNSGAGTGTSTIAPGYG).

It belongs to the universal ribosomal protein uS9 family.

This chain is Small ribosomal subunit protein uS9, found in Bifidobacterium animalis subsp. lactis (strain AD011).